A 310-amino-acid chain; its full sequence is Methionyl-tRNA formyltransferase (310 aa).

109–112 (SLLP) is a binding site for (6S)-5,6,7,8-tetrahydrofolate.

This sequence belongs to the Fmt family.

It carries out the reaction L-methionyl-tRNA(fMet) + (6R)-10-formyltetrahydrofolate = N-formyl-L-methionyl-tRNA(fMet) + (6S)-5,6,7,8-tetrahydrofolate + H(+). Functionally, attaches a formyl group to the free amino group of methionyl-tRNA(fMet). The formyl group appears to play a dual role in the initiator identity of N-formylmethionyl-tRNA by promoting its recognition by IF2 and preventing the misappropriation of this tRNA by the elongation apparatus. The polypeptide is Methionyl-tRNA formyltransferase (Macrococcus caseolyticus (strain JCSC5402) (Macrococcoides caseolyticum)).